The primary structure comprises 114 residues: Ribosome-binding factor A (114 aa).

This sequence belongs to the RbfA family. As to quaternary structure, monomer. Binds 30S ribosomal subunits, but not 50S ribosomal subunits or 70S ribosomes.

Its subcellular location is the cytoplasm. Its function is as follows. One of several proteins that assist in the late maturation steps of the functional core of the 30S ribosomal subunit. Associates with free 30S ribosomal subunits (but not with 30S subunits that are part of 70S ribosomes or polysomes). Required for efficient processing of 16S rRNA. May interact with the 5'-terminal helix region of 16S rRNA. The chain is Ribosome-binding factor A from Listeria monocytogenes serotype 4b (strain F2365).